The sequence spans 189 residues: GTPase KRas (189 aa).

The residue at position 1 (Met-1) is an N-acetylmethionine. Residue Thr-2 is modified to N-acetylthreonine; in GTPase KRas, N-terminally processed. GTP is bound by residues 10–18 (GAGGVGKSA), 29–35 (VDEYDPT), and 59–60 (AG). The short motif at 32 to 40 (YDPTIEDSY) is the Effector region element. Position 104 is an N6-acetyllysine (Lys-104). 116–119 (NKCD) contributes to the GTP binding site. A hypervariable region region spans residues 166-185 (YRLKKISKEEKTPGCVKIKK). Lys-170 participates in a covalent cross-link: Glycyl lysine isopeptide (Lys-Gly) (interchain with G-Cter in ubiquitin). Cys-180 is lipidated: S-palmitoyl cysteine. Residues Lys-182, Lys-184, and Lys-185 are each lipidated (N6-palmitoyl lysine). Cys-186 is modified (cysteine methyl ester). Cys-186 is lipidated: S-farnesyl cysteine. Residues 187-189 (VIM) constitute a propeptide, removed in mature form.

Belongs to the small GTPase superfamily. Ras family. As to quaternary structure, interacts with PHLPP. Interacts (active GTP-bound form preferentially) with RGS14. Interacts (when farnesylated) with PDE6D; this promotes dissociation from the cell membrane. Interacts with SOS1. Interacts (when farnesylated) with GPR31. Interacts with RAP1GDS1. Interacts (active GTP-bound form) with both SHOC2 and PP1c (all isoforms) to form a tertiary complex; SHOC2 and PP1c preferably bind M-Ras/MRAS, but they also bind K-Ras/KRAS, N-Ras/NRAS and H-Ras/HRAS. Interacts (GTP-bound form) with MAPKAP1/SIN1; inhibiting K-Ras/KRAS activity. Interacts (when farnesylated) with GPR31. Acetylation at Lys-104 prevents interaction with guanine nucleotide exchange factors (GEFs). Post-translationally, ubiquitinated by the BCR(LZTR1) E3 ubiquitin ligase complex at Lys-170 in a non-degradative manner, leading to inhibit Ras signaling by decreasing Ras association with membranes. In terms of processing, palmitoylated at Lys-182, Lys-184 and Lys-185. Lysine-depalmitoylation by SIRT2 promotes its localization to endomembranes in endocytic pathways.

The protein resides in the cell membrane. The protein localises to the endomembrane system. Its subcellular location is the cytoplasm. It is found in the cytosol. The enzyme catalyses GTP + H2O = GDP + phosphate + H(+). Alternates between an inactive form bound to GDP and an active form bound to GTP. Activated by a guanine nucleotide-exchange factor (GEF) and inactivated by a GTPase-activating protein (GAP). Interaction with SOS1 promotes exchange of bound GDP to GTP. In terms of biological role, ras proteins bind GDP/GTP and possess intrinsic GTPase activity. Plays an important role in the regulation of cell proliferation. Plays a role in promoting oncogenic events by inducing transcriptional silencing of tumor suppressor genes (TSGs) in colorectal cancer (CRC) cells in a ZNF304-dependent manner. The chain is GTPase KRas (Kras) from Rattus norvegicus (Rat).